Reading from the N-terminus, the 253-residue chain is uncharacterized protein (253 aa).

C2HC LYAR-type zinc fingers lie at residues Met1–Arg26 and Asn27–Ile51. The Zn(2+) site is built by Cys6, Cys9, His21, Cys25, Cys32, Cys35, His47, and Cys50. Residues Ala136–Thr171 adopt a coiled-coil conformation.

Its subcellular location is the nucleus. This is an uncharacterized protein from Caenorhabditis elegans.